A 290-amino-acid chain; its full sequence is ATP synthase gamma chain (290 aa).

It belongs to the ATPase gamma chain family. As to quaternary structure, F-type ATPases have 2 components, CF(1) - the catalytic core - and CF(0) - the membrane proton channel. CF(1) has five subunits: alpha(3), beta(3), gamma(1), delta(1), epsilon(1). CF(0) has three main subunits: a, b and c.

The protein resides in the cell inner membrane. Functionally, produces ATP from ADP in the presence of a proton gradient across the membrane. The gamma chain is believed to be important in regulating ATPase activity and the flow of protons through the CF(0) complex. The sequence is that of ATP synthase gamma chain from Amoebophilus asiaticus (strain 5a2).